Here is a 549-residue protein sequence, read N- to C-terminus: Neutral amino acid transporter 9 (549 aa).

A disordered region spans residues 1-27; the sequence is MDEDSKPLLGSVPTGDYYTDSLDPKQR. Residues 1 to 107 lie on the Cytoplasmic side of the membrane; that stretch reads MDEDSKPLLG…GGDSPIKNPS (107 aa). The chain crosses the membrane as a helical span at residues 108-128; sequence IVTIFAIWNTMMGTSILSIPW. Residues 117-122 form an important for arginine binding and amino acid transport region; the sequence is TMMGTS. Serine 122 contacts arginine. The Lumenal segment spans residues 129 to 134; sequence GIKQAG. A helical transmembrane segment spans residues 135 to 155; that stretch reads FTLGIIIIVLMGLLTLYCCYR. Residues 156–186 are Cytoplasmic-facing; the sequence is VLKSTKSIPYVDTSDWEFPDVCKYYFGGFGK. The helical transmembrane segment at 187–213 threads the bilayer; sequence WSSLVFSLVSLIGAMVVYWVLMSNFLF. Residues 214-271 are Lumenal-facing; sequence NTGKFIFNYVHNVNTSDAFGTNGTERVICPYPDVDPHGNSSTSLYSGSDNSTGLEFDH. N-linked (GlcNAc...) asparagine glycosylation is found at asparagine 227, asparagine 235, asparagine 252, and asparagine 263. The cysteines at positions 242 and 412 are disulfide-linked. Residues 272–288 form a helical membrane-spanning segment; that stretch reads WWSKTNTIPFYLILLLL. The Cytoplasmic segment spans residues 289-297; that stretch reads PLLNFRSAS. The chain crosses the membrane as a helical span at residues 298–322; sequence FFARFTFLGTISVIYLIFLVTYKAI. Over 323–344 the chain is Lumenal; that stretch reads QLGFHLEFHWFDSSMFFVPEFR. Residues 345-365 form a helical membrane-spanning segment; sequence TLFPQLSGVLTLAFFIHNCII. Residues 366–382 are Cytoplasmic-facing; it reads TLMKNNKHQENNVRDLS. A helical membrane pass occupies residues 383 to 403; it reads LAYLLVGLTYLYVGVLIFAAF. Over 404–425 the chain is Lumenal; that stretch reads PSPPLSKECIEPNFLDNFPSSD. The helical transmembrane segment at 426–446 threads the bilayer; it reads ILVFVARTFLLFQMTTVYPLL. A CARC motif motif is present at residues 432 to 442; that stretch reads RTFLLFQMTTV. The CRAC motif signature appears at 445–451; sequence LLGYLVR. The Cytoplasmic segment spans residues 447 to 467; it reads GYLVRVQLMGQIFGNHYPGFL. A helical transmembrane segment spans residues 468-488; sequence HVFVLNVFVVGAGVLMARFYP. The Lumenal segment spans residues 489–495; sequence NIGSIIR. A helical membrane pass occupies residues 496-516; sequence YSGALCGLALVFVLPSLIHMV. Over 517-528 the chain is Cytoplasmic; it reads SLKRRGELRWTS. Residues 529–549 form a helical membrane-spanning segment; the sequence is TLFHGFLILLGVANLLGQFFM.

It belongs to the amino acid/polyamine transporter 2 family. SLC38A9 subfamily. Associated component of the Ragulator complex. Associated component of the Rag GTPases heterodimers (RRAGA and RRAGC). Post-translationally, glycosylated.

It localises to the lysosome membrane. It is found in the late endosome membrane. It catalyses the reaction L-leucine(in) = L-leucine(out). It carries out the reaction L-tyrosine(in) = L-tyrosine(out). The enzyme catalyses L-glutamine(out) = L-glutamine(in). The catalysed reaction is L-asparagine(out) = L-asparagine(in). Amino acid transport activity is increased by sodium. Transport of L-glutamine, leucine and tyrosine is increased by arginine binding. In terms of biological role, lysosomal amino acid transporter involved in the activation of mTORC1 in response to amino acid levels. Probably acts as an amino acid sensor of the Rag GTPases and Ragulator complexes, 2 complexes involved in amino acid sensing and activation of mTORC1, a signaling complex promoting cell growth in response to growth factors, energy levels, and amino acids. Following activation by amino acids, the Ragulator and Rag GTPases function as a scaffold recruiting mTORC1 to lysosomes where it is in turn activated. SLC38A9 mediates transport of amino acids with low capacity and specificity with a slight preference for polar amino acids. Acts as an arginine sensor. Following activation by arginine binding, mediates transport of L-glutamine, leucine and tyrosine with high efficiency, and is required for the efficient utilization of these amino acids after lysosomal protein degradation. However, the transport mechanism is not well defined and the role of sodium is not clear. Guanine exchange factor (GEF) that, upon arginine binding, stimulates GDP release from RRAGA and therefore activates the Rag GTPase heterodimer and the mTORC1 pathway in response to nutrient sufficiency. The protein is Neutral amino acid transporter 9 of Danio rerio (Zebrafish).